A 235-amino-acid chain; its full sequence is Futalosine hydrolase (235 aa).

It belongs to the PNP/UDP phosphorylase family. Futalosine hydrolase subfamily.

The enzyme catalyses futalosine + H2O = dehypoxanthine futalosine + hypoxanthine. It functions in the pathway quinol/quinone metabolism; menaquinone biosynthesis. In terms of biological role, catalyzes the hydrolysis of futalosine (FL) to dehypoxanthine futalosine (DHFL) and hypoxanthine, a step in the biosynthesis of menaquinone (MK, vitamin K2). Does not accept aminodeoxyfutalosine (AFL) as a substrate. This Streptomyces coelicolor (strain ATCC BAA-471 / A3(2) / M145) protein is Futalosine hydrolase.